A 541-amino-acid polypeptide reads, in one-letter code: Nectin 1b (541 aa).

Positions 1 to 21 are cleaved as a signal peptide; sequence MDKQESFFVGHKSHRCSQNRS. Residues 22–396 lie on the Extracellular side of the membrane; that stretch reads VSQIHQRTSR…PAELHSSGAA (375 aa). 7 N-linked (GlcNAc...) asparagine glycosylation sites follow: Asn-51, Asn-105, Asn-180, Asn-242, Asn-326, Asn-337, and Asn-372. The 106-residue stretch at 77-182 folds into the Ig-like V-type domain; the sequence is GDTVELKCLF…GNRENMVNLT (106 aa). Residues Cys-84 and Cys-165 are joined by a disulfide bond. Ig-like C2-type domains follow at residues 187–282 and 287–374; these read PVTK…VILN and PEVK…VNVT. Disulfide bonds link Cys-212-Cys-266 and Cys-309-Cys-356. A helical membrane pass occupies residues 397 to 417; it reads IGGAVGGVALLVAAIALLVFF. The Cytoplasmic portion of the chain corresponds to 418–541; the sequence is LRRRQRTFKG…SVISKKEWYV (124 aa). The tract at residues 440–507 is disordered; it reads YSKAGGMPAH…VDEGESRDYD (68 aa). Residues 479-493 show a composition bias toward basic and acidic residues; it reads SGDRDFDGNSEDLKR.

It belongs to the nectin family. As to quaternary structure, cis- and trans-homodimer. Can form trans-heterodimers. In terms of tissue distribution, expressed in the developing eye and nervous system.

It is found in the cell membrane. It localises to the cell junction. Its subcellular location is the adherens junction. Functionally, cell adhesion molecule that promotes cell-cell contacts and plays important roles in the development of the nervous system. Acts by forming homophilic or heterophilic trans-dimers. The sequence is that of Nectin 1b from Danio rerio (Zebrafish).